The chain runs to 830 residues: Probable glucan 1,3-beta-glucosidase D (830 aa).

The segment covering 1–34 (MPSQSRSRDRYRGRDTEYTRRRYPDEHDYSHDDH) has biased composition (basic and acidic residues). Residues 1 to 279 (MPSQSRSRDR…PPMDARWPKG (279 aa)) form a disordered region. Over 1 to 301 (MPSQSRSRDR…GRPFWKQKKW (301 aa)) the chain is Cytoplasmic. Residues 35–51 (DYDYDDDDDDNDDLEQD) are compositionally biased toward acidic residues. 2 stretches are compositionally biased toward basic and acidic residues: residues 52 to 98 (VTER…ERRR) and 110 to 175 (QHRE…KHQS). Over residues 181-194 (SASHLLSADALARL) the composition is skewed to low complexity. Composition is skewed to basic and acidic residues over residues 198 to 215 (YEKEDRRERAHAKDAAKA), 228 to 243 (EQERGLRAEKPRDRSR), and 253 to 264 (EEGRGPEMEFRR). Residues 302-322 (LIGIGVVILILVIVIPVAVVV) form a helical; Signal-anchor for type II membrane protein membrane-spanning segment. The Extracellular portion of the chain corresponds to 323 to 830 (SKKHNDKPNA…PDFGSLPEYY (508 aa)). The interval 327–351 (NDKPNATTTQPDGTTPSNSNLDGLS) is disordered. Residues 330 to 348 (PNATTTQPDGTTPSNSNLD) are compositionally biased toward polar residues. Asn-331, Asn-376, Asn-381, Asn-393, Asn-546, and Asn-558 each carry an N-linked (GlcNAc...) asparagine glycan. The active-site Proton donor is Glu-597. Asn-610, Asn-636, Asn-669, and Asn-689 each carry an N-linked (GlcNAc...) asparagine glycan. Glu-701 acts as the Nucleophile in catalysis.

This sequence belongs to the glycosyl hydrolase 5 (cellulase A) family.

Its subcellular location is the cell membrane. It catalyses the reaction Successive hydrolysis of beta-D-glucose units from the non-reducing ends of (1-&gt;3)-beta-D-glucans, releasing alpha-glucose.. Glucosidase involved in the degradation of cellulosic biomass. Active on lichenan. The sequence is that of Probable glucan 1,3-beta-glucosidase D (exgD) from Aspergillus clavatus (strain ATCC 1007 / CBS 513.65 / DSM 816 / NCTC 3887 / NRRL 1 / QM 1276 / 107).